Consider the following 143-residue polypeptide: UPF0251 protein Rru_A1194 (143 aa).

The disordered stretch occupies residues 100–143 (LDGSACPNRRQRRGPCARRGAAGALARQTGDEPPSSPTDNEKDD). Positions 116 to 126 (ARRGAAGALAR) are enriched in low complexity.

This sequence belongs to the UPF0251 family.

This is UPF0251 protein Rru_A1194 from Rhodospirillum rubrum (strain ATCC 11170 / ATH 1.1.1 / DSM 467 / LMG 4362 / NCIMB 8255 / S1).